Reading from the N-terminus, the 141-residue chain is uncharacterized protein (141 aa).

A helical transmembrane segment spans residues 114-134 (ILFTCYIQSFSLLISNFFIAI).

It localises to the membrane. This is an uncharacterized protein from Schizosaccharomyces pombe (strain 972 / ATCC 24843) (Fission yeast).